We begin with the raw amino-acid sequence, 468 residues long: UDP-N-acetylmuramate--L-alanine ligase (468 aa).

116–122 provides a ligand contact to ATP; that stretch reads GTHGKTT.

It belongs to the MurCDEF family.

Its subcellular location is the cytoplasm. It catalyses the reaction UDP-N-acetyl-alpha-D-muramate + L-alanine + ATP = UDP-N-acetyl-alpha-D-muramoyl-L-alanine + ADP + phosphate + H(+). Its pathway is cell wall biogenesis; peptidoglycan biosynthesis. Its function is as follows. Cell wall formation. This is UDP-N-acetylmuramate--L-alanine ligase from Fusobacterium nucleatum subsp. nucleatum (strain ATCC 25586 / DSM 15643 / BCRC 10681 / CIP 101130 / JCM 8532 / KCTC 2640 / LMG 13131 / VPI 4355).